The sequence spans 411 residues: Multifunctional CCA protein (411 aa).

Residues G8 and R11 each contribute to the ATP site. 2 residues coordinate CTP: G8 and R11. Mg(2+) contacts are provided by E21 and D23. ATP is bound by residues R91, R137, and R140. CTP contacts are provided by R91, R137, and R140. The 102-residue stretch at 228–329 folds into the HD domain; the sequence is TGVHALLALE…LKTLLALDGL (102 aa).

The protein belongs to the tRNA nucleotidyltransferase/poly(A) polymerase family. Bacterial CCA-adding enzyme type 1 subfamily. As to quaternary structure, monomer. Can also form homodimers and oligomers. The cofactor is Mg(2+). Ni(2+) is required as a cofactor.

The catalysed reaction is a tRNA precursor + 2 CTP + ATP = a tRNA with a 3' CCA end + 3 diphosphate. It carries out the reaction a tRNA with a 3' CCA end + 2 CTP + ATP = a tRNA with a 3' CCACCA end + 3 diphosphate. Functionally, catalyzes the addition and repair of the essential 3'-terminal CCA sequence in tRNAs without using a nucleic acid template. Adds these three nucleotides in the order of C, C, and A to the tRNA nucleotide-73, using CTP and ATP as substrates and producing inorganic pyrophosphate. tRNA 3'-terminal CCA addition is required both for tRNA processing and repair. Also involved in tRNA surveillance by mediating tandem CCA addition to generate a CCACCA at the 3' terminus of unstable tRNAs. While stable tRNAs receive only 3'-terminal CCA, unstable tRNAs are marked with CCACCA and rapidly degraded. The sequence is that of Multifunctional CCA protein from Teredinibacter turnerae (strain ATCC 39867 / T7901).